A 78-amino-acid polypeptide reads, in one-letter code: Large ribosomal subunit protein bL28 (78 aa).

Residues 1 to 23 (MSRVCQVTGKRPITGNNVSHSKR) form a disordered region.

This sequence belongs to the bacterial ribosomal protein bL28 family.

The polypeptide is Large ribosomal subunit protein bL28 (Marinomonas sp. (strain MWYL1)).